The following is a 363-amino-acid chain: 5-hydroxytryptamine receptor 1E (363 aa).

At 1–21 the chain is on the extracellular side; sequence MNITNCTTEASMAIRPKTITE. Residues asparagine 2 and asparagine 5 are each glycosylated (N-linked (GlcNAc...) asparagine). A helical membrane pass occupies residues 22 to 45; it reads KMLICMTLVVITTLTTLLNLAVIM. Over 46–59 the chain is Cytoplasmic; that stretch reads AIGTTKKLHQPANY. Residues 60-84 traverse the membrane as a helical segment; sequence LICSLAVTDLLVAVLVMPLSIIYIV. The Extracellular portion of the chain corresponds to 85–92; it reads MDRWKLGY. A helical transmembrane segment spans residues 93 to 118; it reads FLCEVWLSVDMTCCTCSILHLCVIAL. Cysteine 95 and cysteine 173 are disulfide-bonded. Residues aspartate 102 and cysteine 106 each coordinate serotonin. The DRY motif; important for ligand-induced conformation changes signature appears at 119 to 121; sequence DRY. At 119–138 the chain is on the cytoplasmic side; it reads DRYWAITNAIEYARKRTAKR. Residues 139-157 traverse the membrane as a helical segment; sequence AALMILTVWTISIFISMPP. The Extracellular portion of the chain corresponds to 158 to 179; the sequence is LFWRSHRRLSPPPSQCTIQHDH. Residues 180 to 203 form a helical membrane-spanning segment; that stretch reads VIYTIYSTLGAFYIPLTLILILYY. Residues 204 to 291 lie on the Cytoplasmic side of the membrane; that stretch reads RIYHAAKSLY…SSTRERKAAR (88 aa). A helical membrane pass occupies residues 292–316; sequence ILGLILGAFILSWLPFFIKELIVGL. At 317-322 the chain is on the extracellular side; it reads SIYTVS. A helical transmembrane segment spans residues 323-345; sequence SEVADFLTWLGYVNSLINPLLYT. Positions 340-344 match the NPxxY motif; important for ligand-induced conformation changes and signaling motif; the sequence is NPLLY. The Cytoplasmic portion of the chain corresponds to 346-363; the sequence is SFNEDFKLAFKKLIRCRE.

The protein belongs to the G-protein coupled receptor 1 family.

It is found in the cell membrane. Its function is as follows. G-protein coupled receptor for 5-hydroxytryptamine (serotonin). Also functions as a receptor for various alkaloids and psychoactive substances. Ligand binding causes a conformation change that triggers signaling via guanine nucleotide-binding proteins (G proteins) and modulates the activity of downstream effectors, such as adenylate cyclase. HTR1E is coupled to G(i)/G(o) G alpha proteins and mediates inhibitory neurotransmission by inhibiting adenylate cyclase activity. This chain is 5-hydroxytryptamine receptor 1E (HTR1E), found in Pan troglodytes (Chimpanzee).